The primary structure comprises 323 residues: NADH-ubiquinone oxidoreductase chain 1 (323 aa).

The next 8 helical transmembrane spans lie at 8 to 28 (VINPLAYIVPVLLAVAFLTLL), 74 to 94 (FLFLATPMLALTLALTLWAPM), 105 to 125 (LGVLFVLALSSLAVYSILGSG), 145 to 165 (ISYEVSLGLILLSVIIITGGF), 176 to 196 (SIWLLVPAWPLAAMWYISTLA), 236 to 256 (ILLMNTLSAVLFLGASHIPAF), 258 to 278 (ELTALNLMTKAALLSVVFLWV), and 298 to 318 (FLPLTLALVLWHLALPIALAG).

This sequence belongs to the complex I subunit 1 family.

The protein localises to the mitochondrion inner membrane. It catalyses the reaction a ubiquinone + NADH + 5 H(+)(in) = a ubiquinol + NAD(+) + 4 H(+)(out). Functionally, core subunit of the mitochondrial membrane respiratory chain NADH dehydrogenase (Complex I) that is believed to belong to the minimal assembly required for catalysis. Complex I functions in the transfer of electrons from NADH to the respiratory chain. The immediate electron acceptor for the enzyme is believed to be ubiquinone. In Oncorhynchus mykiss (Rainbow trout), this protein is NADH-ubiquinone oxidoreductase chain 1 (MT-ND1).